Reading from the N-terminus, the 357-residue chain is Phosphoserine aminotransferase (357 aa).

R41 lines the L-glutamate pocket. Residues 76–77, W102, T152, D171, and Q194 contribute to the pyridoxal 5'-phosphate site; that span reads GT. K195 carries the post-translational modification N6-(pyridoxal phosphate)lysine. 235 to 236 lines the pyridoxal 5'-phosphate pocket; the sequence is NT.

Belongs to the class-V pyridoxal-phosphate-dependent aminotransferase family. SerC subfamily. As to quaternary structure, homodimer. Requires pyridoxal 5'-phosphate as cofactor.

It localises to the cytoplasm. The catalysed reaction is O-phospho-L-serine + 2-oxoglutarate = 3-phosphooxypyruvate + L-glutamate. It carries out the reaction 4-(phosphooxy)-L-threonine + 2-oxoglutarate = (R)-3-hydroxy-2-oxo-4-phosphooxybutanoate + L-glutamate. It functions in the pathway amino-acid biosynthesis; L-serine biosynthesis; L-serine from 3-phospho-D-glycerate: step 2/3. Functionally, catalyzes the reversible conversion of 3-phosphohydroxypyruvate to phosphoserine and of 3-hydroxy-2-oxo-4-phosphonooxybutanoate to phosphohydroxythreonine. The polypeptide is Phosphoserine aminotransferase (Limosilactobacillus fermentum (strain NBRC 3956 / LMG 18251) (Lactobacillus fermentum)).